A 638-amino-acid polypeptide reads, in one-letter code: Threonine--tRNA ligase (638 aa).

The 61-residue stretch at 1 to 61 (MPLITLPDGN…DKDCSVKIFT (61 aa)) folds into the TGS domain. Residues 243–535 (DHRKLGKEMD…LIENYAGKFP (293 aa)) are catalytic. Positions 335, 386, and 512 each coordinate Zn(2+).

It belongs to the class-II aminoacyl-tRNA synthetase family. In terms of assembly, homodimer. Zn(2+) is required as a cofactor.

It localises to the cytoplasm. The catalysed reaction is tRNA(Thr) + L-threonine + ATP = L-threonyl-tRNA(Thr) + AMP + diphosphate + H(+). Its function is as follows. Catalyzes the attachment of threonine to tRNA(Thr) in a two-step reaction: L-threonine is first activated by ATP to form Thr-AMP and then transferred to the acceptor end of tRNA(Thr). Also edits incorrectly charged L-seryl-tRNA(Thr). The chain is Threonine--tRNA ligase from Pelagibacter ubique (strain HTCC1062).